Consider the following 1484-residue polypeptide: Ral GTPase-activating protein subunit beta (1484 aa).

2 disordered regions span residues 355–437 and 697–728; these read PRSD…APRR and GGEN…PDSE. Serine 359 carries the post-translational modification Phosphoserine. Residues threonine 363 and threonine 379 each carry the phosphothreonine modification. Composition is skewed to polar residues over residues 369-381, 392-428, and 701-725; these read SMPQ…TTPP, NKAT…TSSE, and NLKS…PTTP. Phosphoserine occurs at positions 421 and 710. At threonine 724 the chain carries Phosphothreonine. The Rap-GAP domain occupies 1138 to 1382; the sequence is IGYLDLLPCR…TTLEKEVPVI (245 aa). A Phosphoserine modification is found at serine 1275. The segment at 1301–1325 is disordered; the sequence is DSLNSSQRLSPSSRMKKLPQGRPVP. The span at 1302–1313 shows a compositional bias: low complexity; sequence SLNSSQRLSPSS.

In terms of assembly, component of the heterodimeric RalGAP1 complex with RALGAPA1 and of the heterodimeric RalGAP2 complex with RALGAPA2. Heterodimerization is required for activity. Detected in brain, thymus, lung, heart, spleen, liver and testis (at protein level).

Functionally, non-catalytic subunit of the heterodimeric RalGAP1 and RalGAP2 complexes which act as GTPase activators for the Ras-like small GTPases RALA and RALB. This Rattus norvegicus (Rat) protein is Ral GTPase-activating protein subunit beta.